The primary structure comprises 541 residues: Phosphoenolpyruvate carboxykinase (ATP) (541 aa).

Substrate-binding residues include arginine 64, tyrosine 206, and lysine 212. Residues lysine 212, histidine 231, and glycine 247–threonine 255 contribute to the ATP site. Mn(2+) is bound by residues lysine 212 and histidine 231. Aspartate 268 is a binding site for Mn(2+). Glutamate 296, arginine 332, and threonine 454 together coordinate ATP. Arginine 332 lines the substrate pocket.

This sequence belongs to the phosphoenolpyruvate carboxykinase (ATP) family. As to quaternary structure, monomer. The cofactor is Mn(2+).

The protein localises to the cytoplasm. It carries out the reaction oxaloacetate + ATP = phosphoenolpyruvate + ADP + CO2. Its pathway is carbohydrate biosynthesis; gluconeogenesis. In terms of biological role, involved in the gluconeogenesis. Catalyzes the conversion of oxaloacetate (OAA) to phosphoenolpyruvate (PEP) through direct phosphoryl transfer between the nucleoside triphosphate and OAA. The protein is Phosphoenolpyruvate carboxykinase (ATP) of Wigglesworthia glossinidia brevipalpis.